A 429-amino-acid chain; its full sequence is Glucose-6-phosphate exchanger SLC37A4 (429 aa).

10 helical membrane-spanning segments follow: residues 84 to 104 (LLLVGLVNIFFAWSSTVPVFA), 105 to 125 (ALWFLNGLAQGLGWPPCGKVL), 139 to 159 (AILSTSMNLAGGLGPILATIL), 167 to 187 (STLALSGALCVVVSFLCLLLI), 219 to 239 (ELLLSPYLWVLSTGYLVVFGV), 260 to 280 (LVGSSYMSALEVGGLVGSIAA), 302 to 322 (GLLLFMMAGMTVSMYLFRVTV), 329 to 349 (LWILVLGAVFGFSSYGPIALF), 368 to 388 (IVGLMANVGGFLAGLPFSTIA), and 394 to 414 (STAFWVAEVICAASTAAFFLL).

It belongs to the major facilitator superfamily. Organophosphate:Pi antiporter (OPA) (TC 2.A.1.4) family. As to expression, mostly expressed in liver and kidney.

Its subcellular location is the endoplasmic reticulum membrane. It catalyses the reaction D-glucose 6-phosphate(in) + phosphate(out) = D-glucose 6-phosphate(out) + phosphate(in). Inhibited by vanadate and chlorogenic acid. In terms of biological role, inorganic phosphate and glucose-6-phosphate antiporter of the endoplasmic reticulum. Transports cytoplasmic glucose-6-phosphate into the lumen of the endoplasmic reticulum and translocates inorganic phosphate into the opposite direction. Forms with glucose-6-phosphatase the complex responsible for glucose production through glycogenolysis and gluconeogenesis. Hence, it plays a central role in homeostatic regulation of blood glucose levels. This chain is Glucose-6-phosphate exchanger SLC37A4, found in Homo sapiens (Human).